The sequence spans 4377 residues: MAHAASQLKKNRDLEINAEEEPEKKRKHRKRSRDRKKKSDANASYLRAARAGHLEKALDYIKNGVDINICNQNGLNALHLASKEGHVEVVSELLQREANVDAATKKGNTALHIASLAGQAEVVKVLVTNGANVNAQSQNGFTPLYMAAQENHLEVVKFLLDNGASQSLATEDGFTPLAVALQQGHDQVVSLLLENDTKGKVRLPALHIAARKDDTKAAALLLQNDNNADVESKSGFTPLHIAAHYGNINVATLLLNRAAAVDFTARNDITPLHVASKRGNANMVKLLLDRGAKIDAKTRDGLTPLHCGARSGHEQVVEMLLDRAAPILSKTKNGLSPLHMATQGDHLNCVQLLLQHNVPVDDVTNDYLTALHVAAHCGHYKVAKVLLDKKANPNAKALNGFTPLHIACKKNRIKVMELLLKHGASIQAVTESGLTPIHVAAFMGHVNIVSQLMHHGASPNTTNVRGETALHMAARSGQAEVVRYLVQDGAQVEAKAKDDQTPLHISARLGKADIVQQLLQQGASPNAATTSGYTPLHLSAREGHEDVAAFLLDHGASLSITTKKGFTPLHVAAKYGKLEVANLLLQKSASPDAAGKSGLTPLHVAAHYDNQKVALLLLDQGASPHAAAKNGYTPLHIAAKKNQMDIATTLLEYGADANAVTRQGIASVHLAAQEGHVDMVSLLLGRNANVNLSNKSGLTPLHLAAQEDRVNVAEVLVNQGAHVDAQTKMGYTPLHVGCHYGNIKIVNFLLQHSAKVNAKTKNGYTPLHQAAQQGHTHIINVLLQNNASPNELTVNGNTALGIARRLGYISVVDTLKIVTEETMTTTTVTEKHKMNVPETMNEVLDMSDDEVRKANAPEMLSDGEYISDVEEGEDAMTGDTDKYLGPQDLKELGDDSLPAEGYMGFSLGARSASLRSFSSDRSYTLNRSSYARDSMMIEELLVPSKEQHLTFTREFDSDSLRHYSWAADTLDNVNLVSSPIHSGFLVSFMVDARGGSMRGSRHHGMRIIIPPRKCTAPTRITCRLVKRHKLANPPPMVEGEGLASRLVEMGPAGAQFLGPVIVEIPHFGSMRGKERELIVLRSENGETWKEHQFDSKNEDLTELLNGMDEELDSPEELGKKRICRIITKDFPQYFAVVSRIKQESNQIGPEGGILSSTTVPLVQASFPEGALTKRIRVGLQAQPVPDEIVKKILGNKATFSPIVTVEPRRRKFHKPITMTIPVPPPSGEGVSNGYKGDTTPNLRLLCSITGGTSPAQWEDITGTTPLTFIKDCVSFTTNVSARFWLADCHQVLETVGLATQLYRELICVPYMAKFVVFAKMNDPVESSLRCFCMTDDKVDKTLEQQENFEEVARSKDIEVLEGKPIYVDCYGNLAPLTKGGQQLVFNFYSFKENRLPFSIKIRDTSQEPCGRLSFLKEPKTTKGLPQTAVCNLNITLPAHKKETESDQDDEIEKTDRRQSFASLALRKRYSYLTEPGMIERSTGATRSLPTTYSYKPFFSTRPYQSWTTAPITVPGPAKSGFTSLSSSSSNTPSASPLKSIWSVSTPSPIKSTLGASTTSSVKSISDVASPIRSFRTMSSPIKTVVSQSPYNIQVSSGTLARAPAVTEATPLKGLASNSTFSSRTSPVTTAGSLLERSSITMTPPASPKSNINMYSSSLPFKSIITSAAPLISSPLKSVVSPVKSAVDVISSAKITMASSLSSPVKQMPGHAEVALVNGSISPLKYPSSSTLINGCKATATLQEKISSATNSVSSVVSAATDTVEKVFSTTTAMPFSPLRSYVSAAPSAFQSLRTPSASALYTSLGSSISATTSSVTSSIITVPVYSVVNVLPEPALKKLPDSNSFTKSAAALLSPIKTLTTETHPQPHFSRTSSPVKSSLFLAPSALKLSTPSSLSSSQEILKDVAEMKEDLMRMTAILQTDVPEEKPFQPELPKEGRIDDEEPFKIVEKVKEDLVKVSEILKKDVCVDNKGSPKSPKSDKGHSPEDDWIEFSSEEIREARQQAAASQSPSLPERVQVKAKAASEKDYNLTKVIDYLTNDIGSSSLTNLKYKFEDAKKDGEERQKRVLKPAIALQEHKLKMPPASMRTSTSEKELCKMADSFFGTDTILESPDDFSQHDQDKSPLSDSGFETRSEKTPSAPQSAESTGPKPLFHEVPIPPVITETRTEVVHVIRSYDPSAGDVPQTQPEEPVSPKPSPTFMELEPKPTTSSIKEKVKAFQMKASSEEDDHNRVLSKGMRVKEETHITTTTRMVYHSPPGGEGASERIEETMSVHDIMKAFQSGRDPSKELAGLFEHKSAVSPDVHKSAAETSAQHAEKDNQMKPKLERIIEVHIEKGNQAEPTEVIIRETKKHPEKEMYVYQKDLSRGDINLKDFLPEKHDAFPCSEEQGQQEEEELTAEESLPSYLESSRVNTPVSQEEDSRPSSAQLISDDSYKTLKLLSQHSIEYHDDELSELRGESYRFAEKMLLSEKLDVSHSDTEESVTDHAGPPSSELQGSDKRSREKIATAPKKEILSKIYKDVSENGVGKVSKDEHFDKVTVLHYSGNVSSPKHAMWMRFTEDRLDRGREKLIYEDRVDRTVKEAEEKLTEVSQFFRDKTEKLNDELQSPEKKARPKNGKEYSSQSPTSSSPEKVLLTELLASNDEWVKARQHGPDGQGFPKAEEKAPSLPSSPEKMVLSQQTEDSKSTVEAKGSISQSKAPDGPQSGFQLKQSKLSSIRLKFEQGTHAKSKDMSQEDRKSDGQSRIPVKKIQESKLPVYQVFAREKQQKAIDLPDESVSVQKDFMVLKTKDEHAQSNEIVVNDSGSDNVKKQRTEMSSKAMPDSFSEQQAKDLACHITSDLATRGPWDKKVFRTWESSGATNNKSQKEKLSHVLVHDVRENHIGHPESKSVDQKNEFMSVTERERKLLTNGSLSEIKEMTVKSPSKKVLYREYVVKEGDHPGGLLDQPSRRSESSAVSHIPVRVADERRMLSSNIPDGFCEQSAFPKHELSQKLSQSSMSKETVETQHFNSIEDEKVTYSEISKVSKHQSYVGLCPPLEETETSPTKSPDSLEFSPGKESPSSDVFDHSPIDGLEKLAPLAQTEGGKEIKTLPVYVSFVQVGKQYEKEIQQGGVKKIISQECKTVQETRGTFYTTRQQKQPPSPQGSPEDDTLEQVSFLDSSGKSPLTPETPSSEEVSYEFTSKTPDSLIAYIPGKPSPIPEVSEESEEEEQAKSTSLKQTTVEETAVEREMPNDVSKDSNQRPKNNRVAYIEFPPPPPLDADQIESDKKHHYLPEKEVDMIEVNLQDEHDKYQLAEPVIRVQPPSPVPPGADVSDSSDDESIYQPVPVKKYTFKLKEVDDEQKEKPKASAEKASNQKELESNGSGKDNEFGLGLDSPQNEIAQNGNNDQSITECSIATTAEFSHDTDATEIDSLDGYDLQDEDDGLTESDSKLPIQAMEIKKDIWNTEGILKPADRSFSQSKLEVIEEEGKVGPDEDKPPSKSSSSEKTPDKTDQKSGAQFFTLEGRHPDRSVFPDTYFSYKVDEEFATPFKTVATKGLDFDPWSNNRGDDEVFDSKSREDETKPFGLAVEDRSPATTPDTTPARTPTDESTPTSEPNPFPFHEGKMFEMTRSGAIDMSKRDFVEERLQFFQIGEHTSEGKSGDQGEGDKSMVTATPQPQSGDTTVETNLERNVETPTVEPNPSIPTSGECQEGTSSSGSLEKSAAATNTSKVDPKLRTPIKMGISASTMTMKKEGPGEITDKIEAVMTSCQGLENETITMISNTANSQMGVRPHEKHDFQKDNFNNNNNLDSSTIQTDNIMSNIVLTEHSAPTCTTEKDNPVKVSSGKKTGVLQGHCVRDKQKVLGEQQKTKELIGIRQKSKLPIKATSPKDTFPPNHMSNTKASKMKQVSQSEKTKALTTSSCVDVKSRIPVKNTHRDNIIAVRKACATQKQGQPEKGKAKQLPSKLPVKVRSTCVTTTTTTATTTTTTTTTTTTSCTVKVRKSQLKEVCKHSIEYFKGISGETLKLVDRLSEEEKKMQSELSDEEESTSRNTSLSETSRGGQPSVTTKSARDKKTEAAPLKSKSEKAGSEKRSSRRTGPQSPCERTDIRMAIVADHLGLSWTELARELNFSVDEINQIRVENPNSLISQSFMLLKKWVTRDGKNATTDALTSVLTKINRIDIVTLLEGPIFDYGNISGTRSFADENNVFHDPVDGWQNETSSGNLESCAQARRVTGGLLDRLDDSPDQCRDSITSYLKGEAGKFEANGSHTEITPEAKTKSYFPESQNDVGKQSTKETLKPKIHGSGHVEEPASPLAAYQKSLEETSKLIIEETKPCVPVSMKKMSRTSPADGKPRLSLHEEEGSSGSEQKQGEGFKVKTKKEIRHVEKKSHS.

The disordered stretch occupies residues 1-44 (MAHAASQLKKNRDLEINAEEEPEKKRKHRKRSRDRKKKSDANAS). Over residues 25 to 38 (KRKHRKRSRDRKKK) the composition is skewed to basic residues. Ser39 carries the phosphoserine modification. ANK repeat units lie at residues 73-102 (NGLN…NVDA), 106-135 (KGNT…NVNA), 139-168 (NGFT…SQSL), 172-201 (DGFT…KGKV), 203-230 (LPAL…NADV), 234-263 (SGFT…AVDF), 267-296 (NDIT…KIDA), 300-329 (DGLT…PILS), 333-362 (NGLS…PVDD), 366-395 (DYLT…NPNA), 399-428 (NGFT…SIQA), 432-461 (SGLT…SPNT), 465-494 (RGET…QVEA), 498-527 (DDQT…SPNA), 531-560 (SGYT…SLSI), 564-593 (KGFT…SPDA), 597-626 (SGLT…SPHA), 630-659 (NGYT…DANA), 663-692 (QGIA…NVNL), 696-725 (SGLT…HVDA), 729-758 (MGYT…KVNA), 762-791 (NGYT…SPNE), and 795-825 (NGNT…TMTT). Phosphoserine is present on Thr468. Ser623 bears the Phosphoserine mark. Residues Thr765 and Glu791 each carry the phosphoserine modification. 9 positions are modified to phosphoserine: Ser847, Ser861, Ser867, Ser913, Ser916, Ser922, Ser957, Ser959, and Ser1113. 2 consecutive ZU5 domains span residues 984–1139 (FLVS…VVSR) and 1141–1288 (KQES…LADC). Residues 1273-1407 (VSFTTNVSAR…SIKIRDTSQE (135 aa)) form a UPA domain region. A phosphoserine mark is found at Ser1445, Ser1459, and Ser1470. Low complexity predominate over residues 1519–1539 (SGFTSLSSSSSNTPSASPLKS). The interval 1519 to 1540 (SGFTSLSSSSSNTPSASPLKSI) is disordered. Phosphoserine is present on residues Ser1622, Ser1625, Ser1632, Ile1651, Leu1658, Ser1984, Ser2111, Ser2123, and Ser2126. Disordered regions lie at residues 1968-1987 (VDNK…SPED), 2107-2159 (TILE…VPIP), 2176-2245 (YDPS…EETH), 2299-2322 (AVSP…DNQM), 2383-2433 (FPCS…ISDD), 2474-2508 (DVSH…KIAT), 2588-2751 (LTEV…VKKI), 2795-2824 (QSNE…MPDS), 3036-3067 (PPLE…DVFD), 3131-3272 (TFYT…KKHH), 3298-3516 (PVIR…SVFP), 3538-3607 (KGLD…HEGK), 3635-3718 (GEHT…DPKL), 3868-3897 (KATS…QSEK), and 4019-4090 (KKMQ…CERT). Over residues 1977-1986 (PKSDKGHSPE) the composition is skewed to basic and acidic residues. Basic and acidic residues predominate over residues 2115–2136 (FSQHDQDKSPLSDSGFETRSEK). Residues 2137–2146 (TPSAPQSAES) show a composition bias toward polar residues. Residues 2299–2308 (AVSPDVHKSA) are compositionally biased toward basic and acidic residues. Acidic residues predominate over residues 2390–2399 (GQQEEEELTA). Residues 2407 to 2417 (LESSRVNTPVS) are compositionally biased toward polar residues. 2 stretches are compositionally biased toward basic and acidic residues: residues 2497–2508 (GSDKRSREKIAT) and 2588–2612 (LTEV…PEKK). The segment covering 2622–2631 (SSQSPTSSSP) has biased composition (low complexity). Polar residues predominate over residues 2706–2716 (SGFQLKQSKLS). Residues 2720 to 2742 (LKFEQGTHAKSKDMSQEDRKSDG) are compositionally biased toward basic and acidic residues. Polar residues predominate over residues 2796–2807 (SNEIVVNDSGSD). Composition is skewed to polar residues over residues 3154-3186 (EQVS…SKTP) and 3214-3224 (KSTSLKQTTVE). Composition is skewed to basic and acidic residues over residues 3227-3242 (AVER…DSNQ) and 3335-3361 (KLKE…KELE). Polar residues predominate over residues 3377-3402 (SPQNEIAQNGNNDQSITECSIATTAE). Residues 3409-3428 (ATEIDSLDGYDLQDEDDGLT) show a composition bias toward acidic residues. 2 stretches are compositionally biased toward basic and acidic residues: residues 3465 to 3481 (EVIE…DKPP) and 3549 to 3575 (RGDD…EDRS). Positions 3576-3598 (PATTPDTTPARTPTDESTPTSEP) are enriched in low complexity. Over residues 3637–3651 (HTSEGKSGDQGEGDK) the composition is skewed to basic and acidic residues. 4 stretches are compositionally biased toward polar residues: residues 3654 to 3669 (VTAT…TVET), 3676 to 3713 (ETPT…NTSK), 3880 to 3897 (HMSN…QSEK), and 4033 to 4052 (SRNT…VTTK). Positions 4053–4076 (SARDKKTEAAPLKSKSEKAGSEKR) are enriched in basic and acidic residues. The region spanning 4090–4174 (TDIRMAIVAD…DIVTLLEGPI (85 aa)) is the Death domain. A phosphoserine mark is found at Ser4211 and Ser4229. Disordered regions lie at residues 4251–4298 (NGSH…EPAS) and 4323–4377 (PVSM…KSHS). The span at 4268 to 4277 (PESQNDVGKQ) shows a compositional bias: polar residues. 2 positions are modified to phosphoserine: Ser4290 and Ser4298. Over residues 4337–4347 (GKPRLSLHEEE) the composition is skewed to basic and acidic residues. Phosphoserine is present on Ser4350. Positions 4362–4377 (VKTKKEIRHVEKKSHS) are enriched in basic residues.

As to quaternary structure, directly interacts with DMD and betaDAG1. This interaction does not interfere with binding between DMD and betaDAG1. It is also required for DMD and betaDAG1 retention at costameres. Interacts (via N-terminal ANK repeats) with SCHIP1 isoform 5 (via C-terminus); this interaction is required for the localization at axon initial segments (AISs) and nodes of Ranvier (NRs). May be a constituent of a NFASC/NRCAM/ankyrin G complex. Interacts with RHBG. Interacts with PLEC and FLNC. Interacts with KCNA1; this inhibits channel activity. Interacts (via ANK repeats) with IQCJ-SCHIP1; required for IQCJ-SCHIP1 localization at axon initial segments (AIS) and nodes of Ranvier. Interacts with SCHIP1. Interacts with SCN5A. Interacts with PKP2 and GJA1/CX43. As to expression, expressed in brain, neurons, muscles and other tissues.

It is found in the cytoplasm. The protein localises to the cytoskeleton. Its subcellular location is the cell projection. The protein resides in the axon. It localises to the cell membrane. It is found in the sarcolemma. The protein localises to the postsynaptic cell membrane. Its subcellular location is the lysosome. The protein resides in the T-tubule. It localises to the golgi apparatus. Functionally, membrane-cytoskeleton linker. May participate in the maintenance/targeting of ion channels and cell adhesion molecules at the nodes of Ranvier and axonal initial segments. In skeletal muscle, required for costamere localization of DMD and betaDAG1. Regulates KCNA1 channel activity in function of dietary Mg(2+) levels, and thereby contributes to the regulation of renal Mg(2+) reabsorption. Required for intracellular adhesion and junctional conductance in myocytes, potentially via stabilization of GJA1/CX43 protein abundance and promotion of PKP2, GJA1/CX43, and SCN5A/Nav1.5 localization to cell-cell junctions. Its function is as follows. May be part of a Golgi-specific membrane cytoskeleton in association with beta-spectrin. This is Ankyrin-3 from Homo sapiens (Human).